Reading from the N-terminus, the 484-residue chain is RuvB-like helicase 1 (484 aa).

Residues 1 to 11 (MSMAASSSTAT) show a composition bias toward low complexity. Residues 1–27 (MSMAASSSTATVQPSGIITQPPPPSTL) form a disordered region. 87–94 (GPPGTGKT) provides a ligand contact to ATP.

This sequence belongs to the RuvB family. In terms of assembly, may form heterododecamers with RVB2. Component of the SWR1 chromatin remodeling complex, the INO80 chromatin remodeling complex, and of the R2TP complex.

It localises to the nucleus. The catalysed reaction is ATP + H2O = ADP + phosphate + H(+). DNA helicase which participates in several chromatin remodeling complexes, including the SWR1 and the INO80 complexes. The SWR1 complex mediates the ATP-dependent exchange of histone H2A for the H2A variant HZT1 leading to transcriptional regulation of selected genes by chromatin remodeling. The INO80 complex remodels chromatin by shifting nucleosomes and is involved in DNA repair. Also involved in pre-rRNA processing. This chain is RuvB-like helicase 1 (RVB1), found in Cryptococcus neoformans var. neoformans serotype D (strain B-3501A) (Filobasidiella neoformans).